We begin with the raw amino-acid sequence, 496 residues long: Adenosylhomocysteinase (496 aa).

Residues threonine 68, aspartate 157, and glutamate 219 each coordinate substrate. 220 to 222 (TTT) serves as a coordination point for NAD(+). Substrate is bound by residues lysine 249 and aspartate 253. NAD(+) is bound by residues asparagine 254, 283–288 (GYGDVG), glutamate 306, asparagine 341, 362–364 (IGH), and asparagine 410.

Belongs to the adenosylhomocysteinase family. Requires NAD(+) as cofactor.

Its subcellular location is the cytoplasm. It carries out the reaction S-adenosyl-L-homocysteine + H2O = L-homocysteine + adenosine. The protein operates within amino-acid biosynthesis; L-homocysteine biosynthesis; L-homocysteine from S-adenosyl-L-homocysteine: step 1/1. In terms of biological role, may play a key role in the regulation of the intracellular concentration of adenosylhomocysteine. This Mycolicibacterium paratuberculosis (strain ATCC BAA-968 / K-10) (Mycobacterium paratuberculosis) protein is Adenosylhomocysteinase.